The chain runs to 312 residues: Ribosomal protein L11 methyltransferase (312 aa).

S-adenosyl-L-methionine is bound by residues T162, G183, D205, and N248.

This sequence belongs to the methyltransferase superfamily. PrmA family.

It is found in the cytoplasm. It carries out the reaction L-lysyl-[protein] + 3 S-adenosyl-L-methionine = N(6),N(6),N(6)-trimethyl-L-lysyl-[protein] + 3 S-adenosyl-L-homocysteine + 3 H(+). Functionally, methylates ribosomal protein L11. This chain is Ribosomal protein L11 methyltransferase, found in Bacillus cereus (strain ATCC 10987 / NRS 248).